The chain runs to 280 residues: Acetyl-coenzyme A carboxylase carboxyl transferase subunit beta (280 aa).

The 253-residue stretch at 28–280 (IMTKCPSCRT…TLTKLLAMHQ (253 aa)) folds into the CoA carboxyltransferase N-terminal domain. Zn(2+) contacts are provided by C32, C35, C51, and C54. The segment at 32 to 54 (CPSCRTIMYTKDLKKNLSVCRTC) adopts a C4-type zinc-finger fold.

The protein belongs to the AccD/PCCB family. Acetyl-CoA carboxylase is a heterohexamer composed of biotin carboxyl carrier protein (AccB), biotin carboxylase (AccC) and two subunits each of ACCase subunit alpha (AccA) and ACCase subunit beta (AccD). Requires Zn(2+) as cofactor.

The protein localises to the cytoplasm. The catalysed reaction is N(6)-carboxybiotinyl-L-lysyl-[protein] + acetyl-CoA = N(6)-biotinyl-L-lysyl-[protein] + malonyl-CoA. It functions in the pathway lipid metabolism; malonyl-CoA biosynthesis; malonyl-CoA from acetyl-CoA: step 1/1. Component of the acetyl coenzyme A carboxylase (ACC) complex. Biotin carboxylase (BC) catalyzes the carboxylation of biotin on its carrier protein (BCCP) and then the CO(2) group is transferred by the transcarboxylase to acetyl-CoA to form malonyl-CoA. The protein is Acetyl-coenzyme A carboxylase carboxyl transferase subunit beta of Shouchella clausii (strain KSM-K16) (Alkalihalobacillus clausii).